The chain runs to 438 residues: Adenosylhomocysteinase (438 aa).

Residues Thr61, Asp137, and Glu162 each coordinate substrate. 163–165 (TTT) is an NAD(+) binding site. 2 residues coordinate substrate: Lys192 and Asp196. NAD(+) is bound by residues Asn197, 226-231 (GYGDVG), Glu249, Asn284, 305-307 (IGH), and Asn352.

The protein belongs to the adenosylhomocysteinase family. NAD(+) serves as cofactor.

It localises to the cytoplasm. The catalysed reaction is S-adenosyl-L-homocysteine + H2O = L-homocysteine + adenosine. It functions in the pathway amino-acid biosynthesis; L-homocysteine biosynthesis; L-homocysteine from S-adenosyl-L-homocysteine: step 1/1. Functionally, may play a key role in the regulation of the intracellular concentration of adenosylhomocysteine. The protein is Adenosylhomocysteinase of Flavobacterium psychrophilum (strain ATCC 49511 / DSM 21280 / CIP 103535 / JIP02/86).